The following is a 318-amino-acid chain: tRNA U34 carboxymethyltransferase (318 aa).

K88, W102, K107, G126, M192, Y196, and R311 together coordinate carboxy-S-adenosyl-L-methionine.

The protein belongs to the class I-like SAM-binding methyltransferase superfamily. CmoB family. Homotetramer.

It carries out the reaction carboxy-S-adenosyl-L-methionine + 5-hydroxyuridine(34) in tRNA = 5-carboxymethoxyuridine(34) in tRNA + S-adenosyl-L-homocysteine + H(+). Catalyzes carboxymethyl transfer from carboxy-S-adenosyl-L-methionine (Cx-SAM) to 5-hydroxyuridine (ho5U) to form 5-carboxymethoxyuridine (cmo5U) at position 34 in tRNAs. This Pseudomonas fluorescens (strain SBW25) protein is tRNA U34 carboxymethyltransferase.